The sequence spans 349 residues: Phenylalanine--tRNA ligase alpha subunit (349 aa).

A Mg(2+)-binding site is contributed by glutamate 258.

This sequence belongs to the class-II aminoacyl-tRNA synthetase family. Phe-tRNA synthetase alpha subunit type 1 subfamily. Tetramer of two alpha and two beta subunits. The cofactor is Mg(2+).

The protein resides in the cytoplasm. It carries out the reaction tRNA(Phe) + L-phenylalanine + ATP = L-phenylalanyl-tRNA(Phe) + AMP + diphosphate + H(+). In Rickettsia akari (strain Hartford), this protein is Phenylalanine--tRNA ligase alpha subunit.